The primary structure comprises 734 residues: Histone-lysine N-methyltransferase SET9 (734 aa).

The region spanning 116–230 (CPFEVNATNR…LGEEITVTYS (115 aa)) is the SET domain. 4 disordered regions span residues 343 to 459 (FDTT…TTET), 523 to 543 (AVPNSAPSQIQEAENNAQQGA), 567 to 591 (AVSTKKKKRRVSEKPAPEPVRKQRV), and 681 to 734 (RKPW…AMAQ). Basic and acidic residues predominate over residues 407–418 (EEPKPPSMREKP). The span at 527-543 (SAPSQIQEAENNAQQGA) shows a compositional bias: polar residues. The span at 578–587 (SEKPAPEPVR) shows a compositional bias: basic and acidic residues.

It belongs to the class V-like SAM-binding methyltransferase superfamily. Histone-lysine methyltransferase family. Suvar4-20 subfamily.

The protein resides in the nucleus. It localises to the chromosome. The enzyme catalyses L-lysyl(20)-[histone H4] + 3 S-adenosyl-L-methionine = N(6),N(6),N(6)-trimethyl-L-lysyl(20)-[histone H4] + 3 S-adenosyl-L-homocysteine + 3 H(+). In terms of biological role, histone methyltransferase that trimethylates 'Lys-20' of histone H4 to form H4K20me3. The chain is Histone-lysine N-methyltransferase SET9 (SET9) from Chaetomium globosum (strain ATCC 6205 / CBS 148.51 / DSM 1962 / NBRC 6347 / NRRL 1970) (Soil fungus).